We begin with the raw amino-acid sequence, 175 residues long: Large ribosomal subunit protein uL10 (175 aa).

It belongs to the universal ribosomal protein uL10 family. In terms of assembly, part of the ribosomal stalk of the 50S ribosomal subunit. The N-terminus interacts with L11 and the large rRNA to form the base of the stalk. The C-terminus forms an elongated spine to which L12 dimers bind in a sequential fashion forming a multimeric L10(L12)X complex.

Functionally, forms part of the ribosomal stalk, playing a central role in the interaction of the ribosome with GTP-bound translation factors. The protein is Large ribosomal subunit protein uL10 of Synechococcus sp. (strain CC9902).